A 351-amino-acid polypeptide reads, in one-letter code: MAFRIASSPFTHNQQRTQRIMLLVILACLPGMLAQVYFFGYGNLIQVGLASATALIAEGVTLSLRKFAVRTTLADNSALLTAVLLGISLPPLAPWWMVVMATVFAIIIAKQLYGGLGQNPFNPAMIGYVVLLISFPVQMTSWLPPVPLQTIPVGFHDALVIIFTGHTPDGYTMQQLMHNVDGISQATPLDTFKTSLRSGQTPQSILQQPMFAQSLSGIGWQWVNIGFLIGGLFLLMRGTIRWHIPVSFLLSLMFCASLSWVIAPEKFAPPMLHLLSGATMLGAFFIATDPVTASTTNRGRLIFGALIGLLVWLIRTYGGYPDGVAFAVLLANITVPLIDYYTKPRAYGHRR.

Helical transmembrane passes span 20 to 40 (IMLLVILACLPGMLAQVYFFG), 44 to 64 (LIQVGLASATALIAEGVTLSL), 89 to 109 (LPPLAPWWMVVMATVFAIIIA), and 123 to 143 (PAMIGYVVLLISFPVQMTSWL). The residue at position 187 (threonine 187) is an FMN phosphoryl threonine. 5 helical membrane passes run 215–235 (LSGIGWQWVNIGFLIGGLFLL), 244–264 (IPVSFLLSLMFCASLSWVIAP), 267–287 (FAPPMLHLLSGATMLGAFFIA), 301–321 (LIFGALIGLLVWLIRTYGGYP), and 322–342 (DGVAFAVLLANITVPLIDYYT).

The protein belongs to the NqrB/RnfD family. The complex is composed of six subunits: RnfA, RnfB, RnfC, RnfD, RnfE and RnfG. FMN serves as cofactor.

The protein localises to the cell inner membrane. Part of a membrane-bound complex that couples electron transfer with translocation of ions across the membrane. This Pectobacterium carotovorum subsp. carotovorum (strain PC1) protein is Ion-translocating oxidoreductase complex subunit D.